Here is a 341-residue protein sequence, read N- to C-terminus: Anthranilate phosphoribosyltransferase (341 aa).

5-phospho-alpha-D-ribose 1-diphosphate is bound by residues Gly81, 84-85, Thr89, 91-94, 109-117, and Ser121; these read GD, NIST, and KHGSRSVSG. Gly81 provides a ligand contact to anthranilate. Ser93 serves as a coordination point for Mg(2+). Arg167 is a binding site for anthranilate. Mg(2+) contacts are provided by Asp226 and Glu227.

The protein belongs to the anthranilate phosphoribosyltransferase family. Homodimer. The cofactor is Mg(2+).

It catalyses the reaction N-(5-phospho-beta-D-ribosyl)anthranilate + diphosphate = 5-phospho-alpha-D-ribose 1-diphosphate + anthranilate. The protein operates within amino-acid biosynthesis; L-tryptophan biosynthesis; L-tryptophan from chorismate: step 2/5. Functionally, catalyzes the transfer of the phosphoribosyl group of 5-phosphorylribose-1-pyrophosphate (PRPP) to anthranilate to yield N-(5'-phosphoribosyl)-anthranilate (PRA). The chain is Anthranilate phosphoribosyltransferase from Methylococcus capsulatus (strain ATCC 33009 / NCIMB 11132 / Bath).